Consider the following 198-residue polypeptide: Probable host range protein 2-3 (198 aa).

Positions 153 to 198 (GENGYEDSTEEEDNEEDTDGVCLYCLEEEEEEDEDEDEDEDEDEEE) are disordered. Composition is skewed to acidic residues over residues 156–171 (GYED…EDTD) and 178–198 (LEEE…DEEE).

The protein belongs to the poxviridae C7 protein family.

Its function is as follows. Plays a role for multiplication of the virus in different cell types. The chain is Probable host range protein 2-3 from Rabbit fibroma virus (strain Kasza) (RFV).